The sequence spans 169 residues: Lipoprotein signal peptidase (169 aa).

3 helical membrane passes run 1–21, 68–88, and 94–114; these read MPES…LILV, WQRW…VVWL, and HETL…GNLY. Residues Asp124 and Asp143 contribute to the active site. The helical transmembrane segment at 135 to 155 threads the bilayer; that stretch reads FFPAFNLADTFITIGAILLAL.

It belongs to the peptidase A8 family.

It localises to the cell inner membrane. It carries out the reaction Release of signal peptides from bacterial membrane prolipoproteins. Hydrolyzes -Xaa-Yaa-Zaa-|-(S,diacylglyceryl)Cys-, in which Xaa is hydrophobic (preferably Leu), and Yaa (Ala or Ser) and Zaa (Gly or Ala) have small, neutral side chains.. It functions in the pathway protein modification; lipoprotein biosynthesis (signal peptide cleavage). This protein specifically catalyzes the removal of signal peptides from prolipoproteins. This is Lipoprotein signal peptidase from Ectopseudomonas mendocina (strain ymp) (Pseudomonas mendocina).